The chain runs to 77 residues: DNA-directed RNA polymerase subunit epsilon (77 aa).

Belongs to the RNA polymerase subunit epsilon family. As to quaternary structure, RNAP is composed of a core of 2 alpha, a beta and a beta' subunit. The core is associated with a delta subunit, and at least one of epsilon or omega. When a sigma factor is associated with the core the holoenzyme is formed, which can initiate transcription.

It catalyses the reaction RNA(n) + a ribonucleoside 5'-triphosphate = RNA(n+1) + diphosphate. Functionally, a non-essential component of RNA polymerase (RNAP). The chain is DNA-directed RNA polymerase subunit epsilon from Streptococcus pneumoniae serotype 19F (strain G54).